Reading from the N-terminus, the 411-residue chain is Phosphoglycerate kinase (411 aa).

Residues 28–30 (DIN), Arg45, 68–71 (HQSR), Arg125, and Arg165 each bind substrate. ATP contacts are provided by residues Glu338 and 364–367 (GGHL).

Belongs to the phosphoglycerate kinase family. As to quaternary structure, homodimer.

The protein localises to the cytoplasm. It carries out the reaction (2R)-3-phosphoglycerate + ATP = (2R)-3-phospho-glyceroyl phosphate + ADP. It participates in carbohydrate degradation; glycolysis; pyruvate from D-glyceraldehyde 3-phosphate: step 2/5. This Methanothermobacter thermautotrophicus (strain ATCC 29096 / DSM 1053 / JCM 10044 / NBRC 100330 / Delta H) (Methanobacterium thermoautotrophicum) protein is Phosphoglycerate kinase (pgk).